Here is a 342-residue protein sequence, read N- to C-terminus: 4-hydroxy-2-oxovalerate aldolase (342 aa).

Positions 5–257 (ITLHDMTLRD…DTGVDVWKIQ (253 aa)) constitute a Pyruvate carboxyltransferase domain. Position 13 to 14 (13 to 14 (RD)) interacts with substrate. Asp14 serves as a coordination point for Mn(2+). His17 serves as the catalytic Proton acceptor. Residues Ser167 and His196 each coordinate substrate. Residues His196 and His198 each contribute to the Mn(2+) site. Tyr287 lines the substrate pocket.

Belongs to the 4-hydroxy-2-oxovalerate aldolase family.

The catalysed reaction is (S)-4-hydroxy-2-oxopentanoate = acetaldehyde + pyruvate. The sequence is that of 4-hydroxy-2-oxovalerate aldolase from Acidovorax sp. (strain JS42).